A 657-amino-acid polypeptide reads, in one-letter code: Endoplasmic reticulum mannosyl-oligosaccharide 1,2-alpha-mannosidase (657 aa).

At 1–49 (MYPPPPAPAPHRDFISVTLSLGESYDNSKSRRRRSCWRKWKQLSRLQRN) the chain is on the cytoplasmic side. Residues 50-70 (VILFVLGFLILCGFLYSLQVS) form a helical membrane-spanning segment. Over 71 to 657 (DQWKALSGSR…AHPLPIWSPA (587 aa)) the chain is Lumenal. Position 101 is a phosphoserine (serine 101). The segment at 118-157 (HLRRGPPHLQIRPPNTVSKDGMQDDAKEREAALGKAQQEE) is disordered. Over residues 138–157 (GMQDDAKEREAALGKAQQEE) the composition is skewed to basic and acidic residues. Glutamate 288 serves as the catalytic Proton donor. Residue aspartate 421 is part of the active site. A disulfide bridge connects residues cysteine 485 and cysteine 514. Glutamate 528 acts as the Proton donor in catalysis. Glutamate 557 is an active-site residue. Threonine 646 is a Ca(2+) binding site.

It belongs to the glycosyl hydrolase 47 family. Ca(2+) is required as a cofactor.

The protein resides in the endoplasmic reticulum membrane. The enzyme catalyses N(4)-(alpha-D-Man-(1-&gt;2)-alpha-D-Man-(1-&gt;2)-alpha-D-Man-(1-&gt;3)-[alpha-D-Man-(1-&gt;2)-alpha-D-Man-(1-&gt;3)-[alpha-D-Man-(1-&gt;2)-alpha-D-Man-(1-&gt;6)]-alpha-D-Man-(1-&gt;6)]-beta-D-Man-(1-&gt;4)-beta-D-GlcNAc-(1-&gt;4)-beta-D-GlcNAc)-L-asparaginyl-[protein] (N-glucan mannose isomer 9A1,2,3B1,2,3) + 4 H2O = N(4)-(alpha-D-Man-(1-&gt;3)-[alpha-D-Man-(1-&gt;3)-[alpha-D-Man-(1-&gt;6)]-alpha-D-Man-(1-&gt;6)]-beta-D-Man-(1-&gt;4)-beta-D-GlcNAc-(1-&gt;4)-beta-D-GlcNAc)-L-asparaginyl-[protein] (N-glucan mannose isomer 5A1,2) + 4 beta-D-mannose. It catalyses the reaction N(4)-(alpha-D-Man-(1-&gt;2)-alpha-D-Man-(1-&gt;2)-alpha-D-Man-(1-&gt;3)-[alpha-D-Man-(1-&gt;3)-[alpha-D-Man-(1-&gt;2)-alpha-D-Man-(1-&gt;6)]-alpha-D-Man-(1-&gt;6)]-beta-D-Man-(1-&gt;4)-beta-D-GlcNAc-(1-&gt;4)-beta-D-GlcNAc)-L-asparaginyl-[protein] (N-glucan mannose isomer 8A1,2,3B1,3) + 3 H2O = N(4)-(alpha-D-Man-(1-&gt;3)-[alpha-D-Man-(1-&gt;3)-[alpha-D-Man-(1-&gt;6)]-alpha-D-Man-(1-&gt;6)]-beta-D-Man-(1-&gt;4)-beta-D-GlcNAc-(1-&gt;4)-beta-D-GlcNAc)-L-asparaginyl-[protein] (N-glucan mannose isomer 5A1,2) + 3 beta-D-mannose. It functions in the pathway protein modification; protein glycosylation. Its function is as follows. Involved in glycoprotein quality control targeting of misfolded glycoproteins for degradation. It primarily trims a single alpha-1,2-linked mannose residue from Man(9)GlcNAc(2) to produce Man(8)GlcNAc(2), but at high enzyme concentrations, as found in the ER quality control compartment (ERQC), it further trims the carbohydrates to Man(5-6)GlcNAc(2). The protein is Endoplasmic reticulum mannosyl-oligosaccharide 1,2-alpha-mannosidase (Man1b1) of Rattus norvegicus (Rat).